A 113-amino-acid polypeptide reads, in one-letter code: Large ribosomal subunit protein uL22 (113 aa).

Belongs to the universal ribosomal protein uL22 family. In terms of assembly, part of the 50S ribosomal subunit.

This protein binds specifically to 23S rRNA; its binding is stimulated by other ribosomal proteins, e.g. L4, L17, and L20. It is important during the early stages of 50S assembly. It makes multiple contacts with different domains of the 23S rRNA in the assembled 50S subunit and ribosome. Functionally, the globular domain of the protein is located near the polypeptide exit tunnel on the outside of the subunit, while an extended beta-hairpin is found that lines the wall of the exit tunnel in the center of the 70S ribosome. In Stenotrophomonas maltophilia (strain K279a), this protein is Large ribosomal subunit protein uL22.